A 262-amino-acid chain; its full sequence is Ribosome-recycling factor, mitochondrial (262 aa).

Residues 1–55 (MASGIRCFRLLHPAFRSYHAALTRPVSEVSMKTVSGRQHGHRQYSAYPAVPVRHF) constitute a mitochondrion transit peptide.

This sequence belongs to the RRF family.

Its subcellular location is the mitochondrion. In terms of biological role, responsible for the disassembly of ribosomes from messenger RNA at the termination of mitochondrial protein biosynthesis. Acts in collaboration with GFM2. Promotes mitochondrial ribosome recycling by dissolution of intersubunit contacts. The polypeptide is Ribosome-recycling factor, mitochondrial (Mrrf) (Mus musculus (Mouse)).